The chain runs to 260 residues: tRNA pseudouridine synthase A (260 aa).

Asp-51 functions as the Nucleophile in the catalytic mechanism. Tyr-109 is a substrate binding site.

It belongs to the tRNA pseudouridine synthase TruA family. Homodimer.

The enzyme catalyses uridine(38/39/40) in tRNA = pseudouridine(38/39/40) in tRNA. In terms of biological role, formation of pseudouridine at positions 38, 39 and 40 in the anticodon stem and loop of transfer RNAs. This Albidiferax ferrireducens (strain ATCC BAA-621 / DSM 15236 / T118) (Rhodoferax ferrireducens) protein is tRNA pseudouridine synthase A.